A 114-amino-acid polypeptide reads, in one-letter code: Large ribosomal subunit protein uL22 (114 aa).

It belongs to the universal ribosomal protein uL22 family. Part of the 50S ribosomal subunit.

This protein binds specifically to 23S rRNA; its binding is stimulated by other ribosomal proteins, e.g. L4, L17, and L20. It is important during the early stages of 50S assembly. It makes multiple contacts with different domains of the 23S rRNA in the assembled 50S subunit and ribosome. Functionally, the globular domain of the protein is located near the polypeptide exit tunnel on the outside of the subunit, while an extended beta-hairpin is found that lines the wall of the exit tunnel in the center of the 70S ribosome. This is Large ribosomal subunit protein uL22 from Ehrlichia chaffeensis (strain ATCC CRL-10679 / Arkansas).